The sequence spans 317 residues: Curved DNA-binding protein (317 aa).

The J domain occupies 5-69 (DYYKILGVEP…QKRAEFDEIR (65 aa)).

Its subcellular location is the cytoplasm. It is found in the nucleoid. DNA-binding protein that preferentially recognizes a curved DNA sequence. It is probably a functional analog of DnaJ; displays overlapping activities with DnaJ, but functions under different conditions, probably acting as a molecular chaperone in an adaptive response to environmental stresses other than heat shock. Lacks autonomous chaperone activity; binds native substrates and targets them for recognition by DnaK. Its activity is inhibited by the binding of CbpM. This Pseudomonas putida (strain W619) protein is Curved DNA-binding protein.